Here is a 1049-residue protein sequence, read N- to C-terminus: Carbamoyl phosphate synthase large chain (1049 aa).

A carboxyphosphate synthetic domain region spans residues 1 to 399 (MRESVRKVLV…SLQKAVRMLD (399 aa)). Positions 127, 167, 173, 174, 206, 208, 213, 239, 240, 241, 282, and 296 each coordinate ATP. One can recognise an ATP-grasp 1 domain in the interval 131–325 (RETMINVGLP…LAYVSAKLAL (195 aa)). The Mg(2+) site is built by Gln-282, Glu-296, and Asn-298. Mn(2+) contacts are provided by Gln-282, Glu-296, and Asn-298. The tract at residues 400-548 (IGEPGVVGGK…LTYNGTEDDI (149 aa)) is oligomerization domain. Residues 549-930 (EFSEAGNKLL…LKSWLSSSPN (382 aa)) form a carbamoyl phosphate synthetic domain region. The 191-residue stretch at 674 to 864 (SKLLDKLGIK…IISLALDGIL (191 aa)) folds into the ATP-grasp 2 domain. Residues Arg-710, Lys-749, Leu-751, Glu-756, Gly-780, Val-781, His-782, Ser-783, Gln-823, and Glu-835 each coordinate ATP. Gln-823, Glu-835, and Asn-837 together coordinate Mg(2+). Gln-823, Glu-835, and Asn-837 together coordinate Mn(2+). The 120-residue stretch at 930-1049 (NKIPNKEGIA…YEISEYGAGI (120 aa)) folds into the MGS-like domain. The allosteric domain stretch occupies residues 931–1049 (KIPNKEGIAL…YEISEYGAGI (119 aa)).

Belongs to the CarB family. As to quaternary structure, composed of two chains; the small (or glutamine) chain promotes the hydrolysis of glutamine to ammonia, which is used by the large (or ammonia) chain to synthesize carbamoyl phosphate. Tetramer of heterodimers (alpha,beta)4. The cofactor is Mg(2+). Mn(2+) is required as a cofactor.

It carries out the reaction hydrogencarbonate + L-glutamine + 2 ATP + H2O = carbamoyl phosphate + L-glutamate + 2 ADP + phosphate + 2 H(+). It catalyses the reaction hydrogencarbonate + NH4(+) + 2 ATP = carbamoyl phosphate + 2 ADP + phosphate + 2 H(+). Its pathway is amino-acid biosynthesis; L-arginine biosynthesis; carbamoyl phosphate from bicarbonate: step 1/1. It participates in pyrimidine metabolism; UMP biosynthesis via de novo pathway; (S)-dihydroorotate from bicarbonate: step 1/3. Large subunit of the glutamine-dependent carbamoyl phosphate synthetase (CPSase). CPSase catalyzes the formation of carbamoyl phosphate from the ammonia moiety of glutamine, carbonate, and phosphate donated by ATP, constituting the first step of 2 biosynthetic pathways, one leading to arginine and/or urea and the other to pyrimidine nucleotides. The large subunit (synthetase) binds the substrates ammonia (free or transferred from glutamine from the small subunit), hydrogencarbonate and ATP and carries out an ATP-coupled ligase reaction, activating hydrogencarbonate by forming carboxy phosphate which reacts with ammonia to form carbamoyl phosphate. The chain is Carbamoyl phosphate synthase large chain from Sulfurisphaera tokodaii (strain DSM 16993 / JCM 10545 / NBRC 100140 / 7) (Sulfolobus tokodaii).